Reading from the N-terminus, the 461-residue chain is Cysteine--tRNA ligase (461 aa).

Cys-30 serves as a coordination point for Zn(2+). The 'HIGH' region signature appears at 32–42 (VTVYDLCHIGH). Zn(2+) contacts are provided by Cys-211, His-236, and Glu-240. Residues 268-272 (KMSKS) carry the 'KMSKS' region motif. An ATP-binding site is contributed by Lys-271.

Belongs to the class-I aminoacyl-tRNA synthetase family. As to quaternary structure, monomer. Zn(2+) is required as a cofactor.

Its subcellular location is the cytoplasm. The catalysed reaction is tRNA(Cys) + L-cysteine + ATP = L-cysteinyl-tRNA(Cys) + AMP + diphosphate. In Shewanella sp. (strain ANA-3), this protein is Cysteine--tRNA ligase.